We begin with the raw amino-acid sequence, 227 residues long: Cytidylate kinase (227 aa).

12–20 (GPSGAGKGT) is an ATP binding site.

Belongs to the cytidylate kinase family. Type 1 subfamily.

The protein resides in the cytoplasm. It catalyses the reaction CMP + ATP = CDP + ADP. The enzyme catalyses dCMP + ATP = dCDP + ADP. This Shigella boydii serotype 4 (strain Sb227) protein is Cytidylate kinase.